The sequence spans 80 residues: Large ribosomal subunit protein bL28 (80 aa).

Residues 1–21 (MSRICQITRKKSMKGNSVAHS) are disordered.

This sequence belongs to the bacterial ribosomal protein bL28 family.

The sequence is that of Large ribosomal subunit protein bL28 from Azobacteroides pseudotrichonymphae genomovar. CFP2.